Consider the following 603-residue polypeptide: MTDVPVSRIRNFSIIAHIDHGKSTLADRLLQVTDTVQQREMKEQFLDNMDLERERGITIKLQAARMNYKAKDGQDYVLNLIDTPGHVDFSYEVSRSLAACEGALLVVDASQGVEAQTLANVYLALDNNLEIIPVLNKIDLPSAEPDRVAAEIEEVVGLDCSDIIQASAKAGIGVDDILEAIVQQVPPPADTVDQPLRALIFDSYYDAYRGVVVYFRVMDGQVKKGDKVRLMASDKEYVIDELGVLSPTQVQVEALHAGEVGYFAAAIKAVADARVGDTITMANSPAAEPLPGYTEANPMVFCGLFPIDADQYPDLKDALEKLKLNDAALSYEPETSSAMGFGFRCGFLGLLHMEIVQERLEREYNLDLITTAPSVIYRVTTTDEEVIEVDNPSLLPPIQKRLKVEEPFIKVEMITPETYVGTLMELCQSRRGVFKDMKFFTQTRTALIYELPLAEVVTDFFDQLKSRTKGYASMEYQLIGYRENPLVKLDILVNGDGVDALAMIVHRDKAYYVGRAMVSKLKELIPRHQFKVPIQAAIGAKVIASEHIPALRKDVLAKCYGGDISRKKKLLQKQAKGKKRMKAIGTVDVPQEAFMAVLKLDPQ.

In terms of domain architecture, tr-type G spans 7–189 (SRIRNFSIIA…AIVQQVPPPA (183 aa)). Residues 19-24 (DHGKST) and 136-139 (NKID) each bind GTP.

It belongs to the TRAFAC class translation factor GTPase superfamily. Classic translation factor GTPase family. LepA subfamily.

The protein resides in the cell inner membrane. It catalyses the reaction GTP + H2O = GDP + phosphate + H(+). In terms of biological role, required for accurate and efficient protein synthesis under certain stress conditions. May act as a fidelity factor of the translation reaction, by catalyzing a one-codon backward translocation of tRNAs on improperly translocated ribosomes. Back-translocation proceeds from a post-translocation (POST) complex to a pre-translocation (PRE) complex, thus giving elongation factor G a second chance to translocate the tRNAs correctly. Binds to ribosomes in a GTP-dependent manner. This Synechocystis sp. (strain ATCC 27184 / PCC 6803 / Kazusa) protein is Elongation factor 4.